Consider the following 427-residue polypeptide: Glutamate-1-semialdehyde 2,1-aminomutase (427 aa).

N6-(pyridoxal phosphate)lysine is present on K263.

It belongs to the class-III pyridoxal-phosphate-dependent aminotransferase family. HemL subfamily. As to quaternary structure, homodimer. The cofactor is pyridoxal 5'-phosphate.

The protein resides in the cytoplasm. The enzyme catalyses (S)-4-amino-5-oxopentanoate = 5-aminolevulinate. Its pathway is porphyrin-containing compound metabolism; protoporphyrin-IX biosynthesis; 5-aminolevulinate from L-glutamyl-tRNA(Glu): step 2/2. The polypeptide is Glutamate-1-semialdehyde 2,1-aminomutase (Caldicellulosiruptor saccharolyticus (strain ATCC 43494 / DSM 8903 / Tp8T 6331)).